Reading from the N-terminus, the 177-residue chain is Large ribosomal subunit protein uL6 (177 aa).

This sequence belongs to the universal ribosomal protein uL6 family. As to quaternary structure, part of the 50S ribosomal subunit.

This protein binds to the 23S rRNA, and is important in its secondary structure. It is located near the subunit interface in the base of the L7/L12 stalk, and near the tRNA binding site of the peptidyltransferase center. The protein is Large ribosomal subunit protein uL6 of Latilactobacillus sakei subsp. sakei (strain 23K) (Lactobacillus sakei subsp. sakei).